The sequence spans 110 residues: U1-lycotoxin-Ls1hh (110 aa).

The N-terminal stretch at 1-20 (MKFVLLFGVLLVTLFSYSSA) is a signal peptide. Positions 21–44 (EMLDDFDQADEDELLSLIEKEEAR) are excised as a propeptide. 4 cysteine pairs are disulfide-bonded: Cys47/Cys62, Cys54/Cys71, Cys61/Cys89, and Cys73/Cys87.

It belongs to the neurotoxin 19 (CSTX) family. 03 subfamily. As to expression, expressed by the venom gland.

It is found in the secreted. This chain is U1-lycotoxin-Ls1hh, found in Lycosa singoriensis (Wolf spider).